We begin with the raw amino-acid sequence, 269 residues long: 5'-nucleotidase SurE (269 aa).

A divalent metal cation contacts are provided by Asp-11, Asp-12, Ser-43, and Asn-101.

This sequence belongs to the SurE nucleotidase family. The cofactor is a divalent metal cation.

It localises to the cytoplasm. The enzyme catalyses a ribonucleoside 5'-phosphate + H2O = a ribonucleoside + phosphate. Nucleotidase that shows phosphatase activity on nucleoside 5'-monophosphates. The chain is 5'-nucleotidase SurE from Prochlorococcus marinus (strain MIT 9313).